Here is a 140-residue protein sequence, read N- to C-terminus: uncharacterized protein (140 aa).

A run of 3 helical transmembrane segments spans residues Ala42–Ser62, Ala65–Gly85, and Arg96–Phe116.

The protein localises to the membrane. This is an uncharacterized protein from Saccharomyces cerevisiae (strain ATCC 204508 / S288c) (Baker's yeast).